Here is a 339-residue protein sequence, read N- to C-terminus: Transcription initiation factor IIB (339 aa).

Residues 39-70 (EELICPVCGSKSIIKDYERAEIVCEMCGCVLQ) form a TFIIB-type zinc finger. Zn(2+) is bound by residues Cys43, Cys46, Cys62, and Cys65. A run of 2 repeats spans residues 156–239 (SELD…SREL) and 250–331 (DYVP…ELTE).

The protein belongs to the TFIIB family.

Its function is as follows. Stabilizes TBP binding to an archaeal box-A promoter. Also responsible for recruiting RNA polymerase II to the pre-initiation complex (DNA-TBP-TFIIB). This is Transcription initiation factor IIB from Methanococcus maripaludis (strain DSM 14266 / JCM 13030 / NBRC 101832 / S2 / LL).